The sequence spans 1406 residues: Protein crumbs homolog 1 (1406 aa).

The signal sequence occupies residues 1–25 (MALKNINYLLIFYLSFSLLIYIKNS). Residues 26–1347 (FCNKNNTRCL…DDLISDIFTT (1322 aa)) are Extracellular-facing. N-linked (GlcNAc...) asparagine glycans are attached at residues asparagine 30, asparagine 41, and asparagine 42. EGF-like domains follow at residues 30–68 (NNTRCLSNSCQNNSTCKDFSKDNDCSCSDTANNLDKDCD), 70–108 (MKDPCFSNPCQGSATCVNTPGERSFLCKCPPGYSGTICE), and 110–146 (TIGSCGKNSCQHGGICHQDPIYPVCICPAGYAGRFCE). 20 cysteine pairs are disulfide-bonded: cysteine 34/cysteine 45, cysteine 39/cysteine 54, cysteine 56/cysteine 67, cysteine 74/cysteine 85, cysteine 79/cysteine 96, cysteine 98/cysteine 107, cysteine 114/cysteine 125, cysteine 119/cysteine 134, cysteine 136/cysteine 145, cysteine 152/cysteine 163, cysteine 157/cysteine 172, cysteine 174/cysteine 183, cysteine 190/cysteine 201, cysteine 195/cysteine 210, cysteine 212/cysteine 221, cysteine 228/cysteine 239, cysteine 233/cysteine 248, cysteine 250/cysteine 259, cysteine 266/cysteine 277, and cysteine 271/cysteine 286. The EGF-like 4; calcium-binding domain occupies 148–184 (DHDECASSPCQNGAVCQDGIDGYSCFCVPGYQGRHCD). The 37-residue stretch at 186 to 222 (EVDECASDPCKNEATCLNEIGRYTCICPHNYSGVNCE) folds into the EGF-like 5; calcium-binding domain. Asparagine 215 is a glycosylation site (N-linked (GlcNAc...) asparagine). Residues 224 to 260 (EIDECWSQPCLNGATCQDALGAYFCDCAPGFLGDHCE) form the EGF-like 6; calcium-binding domain. Residues 262 to 299 (NTDECASQPCLHGGLCVDGENRYSCNCTGSGFTGTHCE) enclose the EGF-like 7; calcium-binding domain. Asparagine 287 is a glycosylation site (N-linked (GlcNAc...) asparagine). Disulfide bonds link cysteine 288/cysteine 298, cysteine 305/cysteine 316, cysteine 310/cysteine 325, cysteine 327/cysteine 336, cysteine 343/cysteine 354, cysteine 348/cysteine 383, cysteine 385/cysteine 394, cysteine 401/cysteine 412, cysteine 406/cysteine 421, cysteine 423/cysteine 438, cysteine 445/cysteine 456, cysteine 450/cysteine 469, and cysteine 471/cysteine 480. EGF-like domains lie at 301-337 (LMPLCWSKPCHNNATCEDSVDNYTCHCWPGYTGAQCE) and 339-395 (DLNE…IHCE). N-linked (GlcNAc...) asparagine glycosylation is found at asparagine 313 and asparagine 322. The region spanning 397-439 (DVNECSSNPCQNGGTCENLPGNYTCHCPFDNLSRTFYGGRDCS) is the EGF-like 10; calcium-binding domain. 3 N-linked (GlcNAc...) asparagine glycosylation sites follow: asparagine 418, asparagine 427, and asparagine 453. In terms of domain architecture, EGF-like 11 spans 441–481 (ILLGCTHQQCLNNGTCIPHFQDGQHGFSCLCPSGYTGSLCE). The Laminin G-like 1 domain occupies 485 to 670 (TLSFEGDGFL…GSSLNVKAGC (186 aa)). N-linked (GlcNAc...) asparagine glycosylation is found at asparagine 550, asparagine 561, and asparagine 657. 4 disulfides stabilise this stretch: cysteine 642-cysteine 670, cysteine 676-cysteine 687, cysteine 681-cysteine 696, and cysteine 698-cysteine 707. An EGF-like 12 domain is found at 672 to 708 (RKDWCESQPCQSRGRCINLWLSYQCDCHRPYEGPNCL). Residues 714-885 (GRFGQDDSTG…PVLVNVTQGC (172 aa)) enclose the Laminin G-like 2 domain. N-linked (GlcNAc...) asparagine glycans are attached at residues asparagine 757, asparagine 871, and asparagine 880. Intrachain disulfides connect cysteine 851-cysteine 885, cysteine 891-cysteine 902, cysteine 896-cysteine 911, cysteine 913-cysteine 922, cysteine 928-cysteine 939, and cysteine 933-cysteine 948. EGF-like domains follow at residues 887-923 (GDNSCKSNPCHNGGVCHSRWDDFSCSCPALTSGKACE) and 924-960 (EVQWCGFSPCPHGAQCQPVLQGFECIANAVFNGQSGQ). The region spanning 950 to 1137 (ANAVFNGQSG…ISTNSVVTGC (188 aa)) is the Laminin G-like 3 domain. Residues asparagine 968, asparagine 975, and asparagine 1000 are each glycosylated (N-linked (GlcNAc...) asparagine). 16 disulfides stabilise this stretch: cysteine 1096/cysteine 1137, cysteine 1143/cysteine 1154, cysteine 1148/cysteine 1163, cysteine 1165/cysteine 1174, cysteine 1181/cysteine 1191, cysteine 1186/cysteine 1200, cysteine 1202/cysteine 1211, cysteine 1218/cysteine 1229, cysteine 1223/cysteine 1238, cysteine 1240/cysteine 1249, cysteine 1259/cysteine 1274, cysteine 1268/cysteine 1283, cysteine 1285/cysteine 1294, cysteine 1301/cysteine 1312, cysteine 1306/cysteine 1321, and cysteine 1323/cysteine 1332. The region spanning 1139–1175 (QLNVCNSNPCLHGGNCEDIYSSYHCSCPLGWSGKHCE) is the EGF-like 15 domain. The EGF-like 16; calcium-binding domain occupies 1177–1212 (NIDECFSNPCIHGNCSDRVAAYHCTCEPGYTGVNCE). Residue asparagine 1190 is glycosylated (N-linked (GlcNAc...) asparagine). 2 EGF-like domains span residues 1214–1250 (DIDNCQSHQCANGATCISHTNGYSCLCFGNFTGKFCR) and 1255–1295 (PSTV…EWCE). N-linked (GlcNAc...) asparagine glycosylation is found at asparagine 1243, asparagine 1265, and asparagine 1273. Residues 1297 to 1333 (DIDECASDPCVNGGLCQDLLNKFQCLCDVAFAGERCE) form the EGF-like 19; calcium-binding domain. The helical transmembrane segment at 1348-1368 (IGSVTVALLLILLLAIVASVV) threads the bilayer. The Cytoplasmic portion of the chain corresponds to 1369–1406 (TSNKRATQGTYSPSRQEKEGSRVEMWNLMPPPAMERLI). Positions 1370-1406 (SNKRATQGTYSPSRQEKEGSRVEMWNLMPPPAMERLI) are interaction with EPB41L5.

It belongs to the Crumbs protein family. Component of a complex composed of PALS1, CRB1 and EPB41L5. Within the complex, interacts (via intracellular domain) with PALS1 and EPB41L5 (via FERM domain). Forms a complex with MPP4 and PALS1. Interacts with MPDZ/MUPP1 and MPP4. Post-translationally, extensively glycosylated. As to expression, preferential expression in retina, also expressed in brain, testis, fetal brain and fetal eye. Expressed at the outer limiting membrane and apical to adherens junctions in the retina.

Its subcellular location is the apical cell membrane. The protein localises to the secreted. It localises to the cell projection. The protein resides in the cilium. It is found in the photoreceptor outer segment. Its subcellular location is the photoreceptor inner segment. Plays a role in photoreceptor morphogenesis in the retina. May maintain cell polarization and adhesion. In Homo sapiens (Human), this protein is Protein crumbs homolog 1.